A 324-amino-acid chain; its full sequence is Chlorophyllase-1 (324 aa).

Positions 136–140 match the GXSXG motif; sequence GHSRG. Serine 138 serves as the catalytic Nucleophile. Active-site charge relay system residues include aspartate 168 and histidine 243.

Belongs to the AB hydrolase superfamily. Lipase family. As to expression, expressed in seedlings, leaves, flowers and siliques, but not in roots.

The protein localises to the cytoplasm. It localises to the cytosol. The catalysed reaction is a chlorophyll + H2O = a chlorophyllide + phytol + H(+). The enzyme catalyses chlorophyll a + H2O = phytol + chlorophyllide a + H(+). The protein operates within porphyrin-containing compound metabolism; chlorophyll degradation. Functionally, catalyzes the hydrolysis of ester bond in chlorophyll to yield chlorophyllide and phytol. Shows a preferential activity toward chlorophyll a. Does not seem to be required for chlorophyll degradation during senescence. May modulate the balance between different plant defense pathways. The sequence is that of Chlorophyllase-1 from Arabidopsis thaliana (Mouse-ear cress).